We begin with the raw amino-acid sequence, 177 residues long: ADP-ribose 1''-phosphate phosphatase (177 aa).

The region spanning 1–177 (MSNITYVKGN…GDMSFTVYQL (177 aa)) is the Macro domain. Residues 9 to 11 (GNI), 24 to 26 (SCN), 31 to 36 (WGGGIA), and 147 to 153 (INSGIFG) each bind substrate.

It belongs to the POA1 family.

The catalysed reaction is ADP-alpha-D-ribose 1''-phosphate + H2O = ADP-D-ribose + phosphate. Highly specific phosphatase involved in the metabolism of ADP-ribose 1''-phosphate (Appr1p) which is produced as a consequence of tRNA splicing. Removes ADP-ribose from glutamate residues in proteins bearing a single ADP-ribose moiety. Inactive towards proteins bearing poly-ADP-ribose. The chain is ADP-ribose 1''-phosphate phosphatase (POA1) from Saccharomyces cerevisiae (strain YJM789) (Baker's yeast).